Here is a 356-residue protein sequence, read N- to C-terminus: MGANVLIMAGGTGGHVFPALACAREFQARGYTVHWLGTPRGIENDLVPAAGLELHRINATGLRGKGKLSLLKAPFMLLKSVWQARAIIRRLRPVCVVGFGGYVTGPGGLAAKLAGVPVIVHEQNAVAGTANRLLVPFAARVCEAFPDTFTLSDSRRTTGNPVRSELFLETPRPALAGRKARLLILGGSLGAEPLNKLLPEALAQVAADLRPEVFHQAGRNHDEVTAERYRAAGVDAQVQPFIKDMAQAYGWADLVVCRAGALTISELAAAGLPSMLVPLPHAIDDHQTRNADYLAREGAAFLMPQRTTGAADLAARLTEVLMQPQRLEQMAQAARRLAKPEATRSVVDTCLEVAHG.

Residues 12-14 (TGG), N124, R163, S188, I242, and Q287 contribute to the UDP-N-acetyl-alpha-D-glucosamine site.

It belongs to the glycosyltransferase 28 family. MurG subfamily.

The protein resides in the cell inner membrane. The enzyme catalyses di-trans,octa-cis-undecaprenyl diphospho-N-acetyl-alpha-D-muramoyl-L-alanyl-D-glutamyl-meso-2,6-diaminopimeloyl-D-alanyl-D-alanine + UDP-N-acetyl-alpha-D-glucosamine = di-trans,octa-cis-undecaprenyl diphospho-[N-acetyl-alpha-D-glucosaminyl-(1-&gt;4)]-N-acetyl-alpha-D-muramoyl-L-alanyl-D-glutamyl-meso-2,6-diaminopimeloyl-D-alanyl-D-alanine + UDP + H(+). Its pathway is cell wall biogenesis; peptidoglycan biosynthesis. Functionally, cell wall formation. Catalyzes the transfer of a GlcNAc subunit on undecaprenyl-pyrophosphoryl-MurNAc-pentapeptide (lipid intermediate I) to form undecaprenyl-pyrophosphoryl-MurNAc-(pentapeptide)GlcNAc (lipid intermediate II). This is UDP-N-acetylglucosamine--N-acetylmuramyl-(pentapeptide) pyrophosphoryl-undecaprenol N-acetylglucosamine transferase from Pseudomonas fluorescens (strain Pf0-1).